The primary structure comprises 188 residues: Ribosome-recycling factor (188 aa).

Belongs to the RRF family.

It localises to the cytoplasm. Responsible for the release of ribosomes from messenger RNA at the termination of protein biosynthesis. May increase the efficiency of translation by recycling ribosomes from one round of translation to another. The protein is Ribosome-recycling factor of Anaeromyxobacter dehalogenans (strain 2CP-C).